The following is a 347-amino-acid chain: Probable nitronate monooxygenase (347 aa).

Residues Asn-69, Gln-171, Gly-176, Gly-213, and 232 to 235 (QIGS) each bind FMN.

This sequence belongs to the nitronate monooxygenase family. NMO class I subfamily. Requires FMN as cofactor.

It carries out the reaction 3 propionate 3-nitronate + 3 O2 + H2O = 3 3-oxopropanoate + 2 nitrate + nitrite + H2O2 + 3 H(+). In terms of biological role, nitronate monooxygenase that uses molecular oxygen to catalyze the oxidative denitrification of alkyl nitronates. Acts on propionate 3-nitronate (P3N), the presumed physiological substrate. Probably functions in the detoxification of P3N, a metabolic poison produced by plants and fungi as a defense mechanism. This is Probable nitronate monooxygenase (yrpB) from Bacillus subtilis (strain 168).